We begin with the raw amino-acid sequence, 254 residues long: Large ribosomal subunit protein uL4 (254 aa).

Belongs to the universal ribosomal protein uL4 family. Part of the 50S ribosomal subunit.

Functionally, one of the primary rRNA binding proteins, this protein initially binds near the 5'-end of the 23S rRNA. It is important during the early stages of 50S assembly. It makes multiple contacts with different domains of the 23S rRNA in the assembled 50S subunit and ribosome. In terms of biological role, forms part of the polypeptide exit tunnel. The protein is Large ribosomal subunit protein uL4 of Methanothermobacter thermautotrophicus (strain ATCC 29096 / DSM 1053 / JCM 10044 / NBRC 100330 / Delta H) (Methanobacterium thermoautotrophicum).